Reading from the N-terminus, the 184-residue chain is Ribosome-recycling factor (184 aa).

A disordered region spans residues 141–161 (KKNDKAISEDDQRKGQDDVQK).

Belongs to the RRF family.

It is found in the cytoplasm. In terms of biological role, responsible for the release of ribosomes from messenger RNA at the termination of protein biosynthesis. May increase the efficiency of translation by recycling ribosomes from one round of translation to another. The polypeptide is Ribosome-recycling factor (Solidesulfovibrio magneticus (strain ATCC 700980 / DSM 13731 / RS-1) (Desulfovibrio magneticus)).